A 734-amino-acid chain; its full sequence is Photosystem I P700 chlorophyll a apoprotein A2 (734 aa).

Transmembrane regions (helical) follow at residues 46 to 69 (IFAS…FHVA), 135 to 158 (LYTG…LHLQ), 175 to 199 (LNHH…HVAI), 273 to 291 (MAHH…GHMY), 330 to 353 (IHFQ…QHMY), 369 to 395 (AALY…IFFI), 417 to 439 (AIIS…LYVH), and 517 to 535 (FLVH…LILV). Positions 559 and 568 each coordinate [4Fe-4S] cluster. Helical transmembrane passes span 575 to 596 (AFYL…YWHW) and 643 to 665 (LSVW…MFLI). Chlorophyll a is bound by residues His-654, Met-662, and Tyr-670. Trp-671 serves as a coordination point for phylloquinone. Residues 707 to 727 (LVGLAHFSVGYIFTYAAFLIA) form a helical membrane-spanning segment.

Belongs to the PsaA/PsaB family. In terms of assembly, the PsaA/B heterodimer binds the P700 chlorophyll special pair and subsequent electron acceptors. PSI consists of a core antenna complex that captures photons, and an electron transfer chain that converts photonic excitation into a charge separation. The eukaryotic PSI reaction center is composed of at least 11 subunits. P700 is a chlorophyll a/chlorophyll a' dimer, A0 is one or more chlorophyll a, A1 is one or both phylloquinones and FX is a shared 4Fe-4S iron-sulfur center. is required as a cofactor.

The protein localises to the plastid. The protein resides in the chloroplast thylakoid membrane. The enzyme catalyses reduced [plastocyanin] + hnu + oxidized [2Fe-2S]-[ferredoxin] = oxidized [plastocyanin] + reduced [2Fe-2S]-[ferredoxin]. Functionally, psaA and PsaB bind P700, the primary electron donor of photosystem I (PSI), as well as the electron acceptors A0, A1 and FX. PSI is a plastocyanin-ferredoxin oxidoreductase, converting photonic excitation into a charge separation, which transfers an electron from the donor P700 chlorophyll pair to the spectroscopically characterized acceptors A0, A1, FX, FA and FB in turn. Oxidized P700 is reduced on the lumenal side of the thylakoid membrane by plastocyanin. The chain is Photosystem I P700 chlorophyll a apoprotein A2 from Triticum aestivum (Wheat).